A 456-amino-acid chain; its full sequence is Bifunctional protein GlmU (456 aa).

The interval 1–229 (MTKKALSAVI…VMEVEGANNR (229 aa)) is pyrophosphorylase. UDP-N-acetyl-alpha-D-glucosamine-binding positions include 11-14 (LAAG), K25, Q76, 81-82 (GT), 103-105 (YGD), G140, E154, N169, and N227. Mg(2+) is bound at residue D105. N227 provides a ligand contact to Mg(2+). A linker region spans residues 230–250 (LQLAALERYLQNKQASKLLLE). Residues 251–456 (GVMIYDPARF…QGWQRPIKKK (206 aa)) form an N-acetyltransferase region. Residues R333 and K351 each coordinate UDP-N-acetyl-alpha-D-glucosamine. H363 (proton acceptor) is an active-site residue. Residues Y366 and N377 each contribute to the UDP-N-acetyl-alpha-D-glucosamine site. Acetyl-CoA is bound by residues A380, 386–387 (NY), S405, A423, and R440.

In the N-terminal section; belongs to the N-acetylglucosamine-1-phosphate uridyltransferase family. This sequence in the C-terminal section; belongs to the transferase hexapeptide repeat family. As to quaternary structure, homotrimer. Mg(2+) is required as a cofactor.

Its subcellular location is the cytoplasm. It carries out the reaction alpha-D-glucosamine 1-phosphate + acetyl-CoA = N-acetyl-alpha-D-glucosamine 1-phosphate + CoA + H(+). It catalyses the reaction N-acetyl-alpha-D-glucosamine 1-phosphate + UTP + H(+) = UDP-N-acetyl-alpha-D-glucosamine + diphosphate. Its pathway is nucleotide-sugar biosynthesis; UDP-N-acetyl-alpha-D-glucosamine biosynthesis; N-acetyl-alpha-D-glucosamine 1-phosphate from alpha-D-glucosamine 6-phosphate (route II): step 2/2. The protein operates within nucleotide-sugar biosynthesis; UDP-N-acetyl-alpha-D-glucosamine biosynthesis; UDP-N-acetyl-alpha-D-glucosamine from N-acetyl-alpha-D-glucosamine 1-phosphate: step 1/1. It functions in the pathway bacterial outer membrane biogenesis; LPS lipid A biosynthesis. Its function is as follows. Catalyzes the last two sequential reactions in the de novo biosynthetic pathway for UDP-N-acetylglucosamine (UDP-GlcNAc). The C-terminal domain catalyzes the transfer of acetyl group from acetyl coenzyme A to glucosamine-1-phosphate (GlcN-1-P) to produce N-acetylglucosamine-1-phosphate (GlcNAc-1-P), which is converted into UDP-GlcNAc by the transfer of uridine 5-monophosphate (from uridine 5-triphosphate), a reaction catalyzed by the N-terminal domain. This Haemophilus influenzae (strain PittGG) protein is Bifunctional protein GlmU.